We begin with the raw amino-acid sequence, 134 residues long: Ribosome-binding factor A (134 aa).

Belongs to the RbfA family. In terms of assembly, monomer. Binds 30S ribosomal subunits, but not 50S ribosomal subunits or 70S ribosomes.

Its subcellular location is the cytoplasm. One of several proteins that assist in the late maturation steps of the functional core of the 30S ribosomal subunit. Associates with free 30S ribosomal subunits (but not with 30S subunits that are part of 70S ribosomes or polysomes). Required for efficient processing of 16S rRNA. May interact with the 5'-terminal helix region of 16S rRNA. This Baumannia cicadellinicola subsp. Homalodisca coagulata protein is Ribosome-binding factor A.